We begin with the raw amino-acid sequence, 395 residues long: Phosphoglycerate kinase (395 aa).

Residues 21–23 (DFN), Arg36, 59–62 (HLGR), Arg120, and Arg153 each bind substrate. ATP contacts are provided by residues Lys203, Glu325, and 351 to 354 (GGDS).

This sequence belongs to the phosphoglycerate kinase family. As to quaternary structure, monomer.

Its subcellular location is the cytoplasm. It carries out the reaction (2R)-3-phosphoglycerate + ATP = (2R)-3-phospho-glyceroyl phosphate + ADP. It participates in carbohydrate degradation; glycolysis; pyruvate from D-glyceraldehyde 3-phosphate: step 2/5. In Roseiflexus sp. (strain RS-1), this protein is Phosphoglycerate kinase.